We begin with the raw amino-acid sequence, 239 residues long: 1-(5-phosphoribosyl)-5-[(5-phosphoribosylamino)methylideneamino] imidazole-4-carboxamide isomerase (239 aa).

Aspartate 9 (proton acceptor) is an active-site residue. The active-site Proton donor is aspartate 131.

Belongs to the HisA/HisF family.

The protein localises to the cytoplasm. The catalysed reaction is 1-(5-phospho-beta-D-ribosyl)-5-[(5-phospho-beta-D-ribosylamino)methylideneamino]imidazole-4-carboxamide = 5-[(5-phospho-1-deoxy-D-ribulos-1-ylimino)methylamino]-1-(5-phospho-beta-D-ribosyl)imidazole-4-carboxamide. The protein operates within amino-acid biosynthesis; L-histidine biosynthesis; L-histidine from 5-phospho-alpha-D-ribose 1-diphosphate: step 4/9. This chain is 1-(5-phosphoribosyl)-5-[(5-phosphoribosylamino)methylideneamino] imidazole-4-carboxamide isomerase, found in Bacteroides fragilis (strain ATCC 25285 / DSM 2151 / CCUG 4856 / JCM 11019 / LMG 10263 / NCTC 9343 / Onslow / VPI 2553 / EN-2).